A 548-amino-acid polypeptide reads, in one-letter code: Probable bifunctional tRNA threonylcarbamoyladenosine biosynthesis protein (548 aa).

Residues 1–338 (MRILGIEGTA…FRPDEVAVTW (338 aa)) are kae1. Fe cation is bound by residues histidine 122 and histidine 126. Residues 143-147 (NASGA), aspartate 175, glycine 188, glutamate 192, and asparagine 271 contribute to the L-threonylcarbamoyladenylate site. Residue aspartate 299 coordinates Fe cation. A Protein kinase domain is found at 349–548 (RMGGDEVQGA…DDIEGRGRYQ (200 aa)). Residues 355–362 (VQGAEATV) and lysine 371 each bind ATP. The segment covering 390 to 404 (ERTRQEARLTSEARR) has biased composition (basic and acidic residues). The segment at 390–413 (ERTRQEARLTSEARRNGVPTPLVR) is disordered. The Proton acceptor; for kinase activity role is filled by aspartate 460.

The protein in the N-terminal section; belongs to the KAE1 / TsaD family. In the C-terminal section; belongs to the protein kinase superfamily. Tyr protein kinase family. BUD32 subfamily. In terms of assembly, component of the KEOPS complex that consists of Kae1, Bud32, Cgi121 and Pcc1; the whole complex dimerizes. Fe(2+) serves as cofactor.

Its subcellular location is the cytoplasm. It catalyses the reaction L-seryl-[protein] + ATP = O-phospho-L-seryl-[protein] + ADP + H(+). The catalysed reaction is L-threonyl-[protein] + ATP = O-phospho-L-threonyl-[protein] + ADP + H(+). The enzyme catalyses L-threonylcarbamoyladenylate + adenosine(37) in tRNA = N(6)-L-threonylcarbamoyladenosine(37) in tRNA + AMP + H(+). Its function is as follows. Required for the formation of a threonylcarbamoyl group on adenosine at position 37 (t(6)A37) in tRNAs that read codons beginning with adenine. Is a component of the KEOPS complex that is probably involved in the transfer of the threonylcarbamoyl moiety of threonylcarbamoyl-AMP (TC-AMP) to the N6 group of A37. The Kae1 domain likely plays a direct catalytic role in this reaction. The Bud32 domain probably displays kinase activity that regulates Kae1 function. The chain is Probable bifunctional tRNA threonylcarbamoyladenosine biosynthesis protein from Haloarcula marismortui (strain ATCC 43049 / DSM 3752 / JCM 8966 / VKM B-1809) (Halobacterium marismortui).